The sequence spans 122 residues: Nodulation protein NolR (122 aa).

The HTH arsR-type domain occupies 15–109 (EKHEDAEIAA…ALSDIYGDDT (95 aa)). Residues 49 to 68 (VGALAHKVGLSQSALSQHLS) constitute a DNA-binding region (H-T-H motif).

As to quaternary structure, binds to the operator site in homodimeric form.

Functionally, negative transacting factor controlling the nod regulon. May control the expression of nodD1, nodD2, nodD3 and nodABC genes. In Rhizobium meliloti (Ensifer meliloti), this protein is Nodulation protein NolR (nolR).